The primary structure comprises 470 residues: MASRRQWGAGAGAVDVPAQERKGGKAATDHLLRAFFAVFFVLEGLSWRRRRRRDGEGVFLLRYVACLLCLQAAKIARRPKTTTVVAQQPPRIRRALADVSNLVNGRAALPVVNRQKAAAAAADKCRKPIKQRNENNKAAKPEVIVISSDSEKHKKNPAQRAASRRAPIQTLTSILTKCSRASDGVISPKKELIYDIDASDSHNELAVVDYVEDIYRFYRNTENTYRPLCTYMVSQTEINERMRAILTDWLIEVHYRLMLMPETLYLTVYIIDQYLSLENVPRKELQLVGVSAMLIACKYEETWAPLVKDFLVISDNSFSRQQVLSTEKSILNKLQWNLTVPTMYMFILRYLKAALGDEELEHMTFFYAELALVQYSMLFFAPSVIAAAAVYAARCTLGLSPLWSDLLEYHTGLAEPQLLECARRLVSLHAAAPESRQKVVYKKYASPKLGAVSLHSPAKKLLPPPSPVAA.

It belongs to the cyclin family. Cyclin AB subfamily.

This chain is Cyclin-B1-3 (CYCB1-3), found in Oryza sativa subsp. japonica (Rice).